The sequence spans 416 residues: Enterobactin exporter EntS (416 aa).

Topologically, residues 1–21 (MNKQSWLLNLSLLKTHPAFRA) are cytoplasmic. Residues 22–42 (VFLARFISIVSLGLLGVAVPV) form a helical membrane-spanning segment. The Periplasmic portion of the chain corresponds to 43 to 55 (QIQMMTHSTWQVG). A helical transmembrane segment spans residues 56–76 (LSVTLTGGAMFVGLMVGGVLA). Residues 77 to 83 (DRYERKK) lie on the Cytoplasmic side of the membrane. Residues 84-104 (VILLARGTCGIGFIGLCLNAL) traverse the membrane as a helical segment. At 105 to 109 (LPEPS) the chain is on the periplasmic side. The helical transmembrane segment at 110–130 (LLAIYLLGLWDGFFASLGVTA) threads the bilayer. The Cytoplasmic segment spans residues 131 to 156 (LLAATPALVGRENLMQAGAITMLTVR). A helical membrane pass occupies residues 157–177 (LGSVISPMIGGLLLATGGVAW). Asn178 is a topological domain (periplasmic). The helical transmembrane segment at 179–199 (YGLAAAGTFITLLPLLSLPAL) threads the bilayer. Over 200-218 (PPPPQPREHPLKSLLAGFR) the chain is Cytoplasmic. A helical transmembrane segment spans residues 219–239 (FLLASPLVGGIALLGGLLTMA). The Periplasmic portion of the chain corresponds to 240–256 (SAVRVLYPALADNWQMS). Residues 257–277 (AAQIGFLYAAIPLGAAIGALT) form a helical membrane-spanning segment. At 278-287 (SGKLAHSVRP) the chain is on the cytoplasmic side. The chain crosses the membrane as a helical span at residues 288 to 307 (GLLMLLSTLGAFLAIGLFGL). Residues 308–313 (MPMWIL) are Periplasmic-facing. Residues 314 to 336 (GVVCLALFGWLSAVSSLLQYTML) traverse the membrane as a helical segment. The Cytoplasmic segment spans residues 337–356 (QTQTPEAMLGRINGLWTAQN). Residues 357–377 (VTGDAIGAALLGGLGAMMTPV) traverse the membrane as a helical segment. Residue Ala378 is a topological domain, periplasmic. Residues 379-399 (SASASGFGLLIIGVLLLLVLV) form a helical membrane-spanning segment. The Cytoplasmic portion of the chain corresponds to 400 to 416 (ELRRFRQTPPQVTASDS).

The protein belongs to the major facilitator superfamily. EntS (TC 2.A.1.38) family.

Its subcellular location is the cell inner membrane. Component of an export pathway for enterobactin. This Escherichia coli O6:H1 (strain CFT073 / ATCC 700928 / UPEC) protein is Enterobactin exporter EntS.